Here is a 350-residue protein sequence, read N- to C-terminus: 3-dehydroquinate synthase (350 aa).

NAD(+) is bound by residues 63–68, 97–101, 121–122, lysine 134, lysine 143, and 161–164; these read DGEEYK, GVIGD, TT, and FLKT. Zn(2+) contacts are provided by glutamate 176, histidine 235, and histidine 252.

The protein belongs to the sugar phosphate cyclases superfamily. Dehydroquinate synthase family. Co(2+) is required as a cofactor. The cofactor is Zn(2+). Requires NAD(+) as cofactor.

Its subcellular location is the cytoplasm. The catalysed reaction is 7-phospho-2-dehydro-3-deoxy-D-arabino-heptonate = 3-dehydroquinate + phosphate. The protein operates within metabolic intermediate biosynthesis; chorismate biosynthesis; chorismate from D-erythrose 4-phosphate and phosphoenolpyruvate: step 2/7. Functionally, catalyzes the conversion of 3-deoxy-D-arabino-heptulosonate 7-phosphate (DAHP) to dehydroquinate (DHQ). This is 3-dehydroquinate synthase from Sulfurovum sp. (strain NBC37-1).